The chain runs to 114 residues: TYRO protein tyrosine kinase-binding protein (114 aa).

An N-terminal signal peptide occupies residues 1–27 (MGAPEPSWCFLFLPVLLTVGGLSPVQA). Topologically, residues 28 to 42 (QSDNYPGCECSSVSP) are extracellular. Residues 43 to 63 (GVLAGIVLGDLVLTLLIALAV) form a helical membrane-spanning segment. Aspartate 52 contacts Ca(2+). The Cytoplasmic segment spans residues 64–114 (YSLGRLVSRGRGTADGTRKQHMAETESPYQELQGQRPEVYSDLNTQRQYYR). The tract at residues 72-114 (RGRGTADGTRKQHMAETESPYQELQGQRPEVYSDLNTQRQYYR) is disordered. An ITAM domain is found at 81 to 109 (RKQHMAETESPYQELQGQRPEVYSDLNTQ). A phosphotyrosine mark is found at tyrosine 92 and tyrosine 103. Residues 105–114 (DLNTQRQYYR) are compositionally biased toward polar residues.

This sequence belongs to the TYROBP family. In terms of assembly, homodimer; disulfide-linked. Homotrimer; disulfide-linked. Homotetramer; disulfide-linked. Homotrimers and homotetramers form when low levels of partner receptors are available and is competitive with assembly with interacting receptors. They may represent alternative oligomerization states or may be intermediates in the receptor assembly process. Binding of a metal cation aids in homooligomerization through coordination of the metal ion by the subunits of the oligomer. Interacts with TREM1. Interacts with TREM2. Interacts with CLECSF5. Interacts with CD300LB and CD300C2. Interacts with CD300E. Interacts (via ITAM domain) with SYK (via SH2 domains); activates SYK mediating neutrophils and macrophages integrin-mediated activation. Interacts with KLRC2. Interacts with CD300H. Interacts with KLRD1. Interacts with SIGLEC1. Post-translationally, following ligand binding by associated receptors, tyrosine phosphorylated in the ITAM domain which leads to activation of additional tyrosine kinases and subsequent cell activation.

The protein resides in the cell membrane. Its function is as follows. Adapter protein which non-covalently associates with activating receptors found on the surface of a variety of immune cells to mediate signaling and cell activation following ligand binding by the receptors. TYROBP is tyrosine-phosphorylated in the ITAM domain following ligand binding by the associated receptors which leads to activation of additional tyrosine kinases and subsequent cell activation. Also has an inhibitory role in some cells. Non-covalently associates with activating receptors of the CD300 family to mediate cell activation. Also mediates cell activation through association with activating receptors of the CD200R family. Required for neutrophil activation mediated by integrin. Required for the activation of myeloid cells mediated by the CLEC5A/MDL1 receptor. Associates with natural killer (NK) cell receptors such as the KLRD1/KLRC2 heterodimer to mediate NK cell activation. Associates with TREM1 to mediate activation of neutrophils and monocytes. Associates with TREM2 on monocyte-derived dendritic cells to mediate up-regulation of chemokine receptor CCR7 and dendritic cell maturation and survival. PAssociation with TREM2 mediates cytokine-induced formation of multinucleated giant cells which are formed by the fusion of macrophages. Stabilizes the TREM2 C-terminal fragment (TREM2-CTF) produced by TREM2 ectodomain shedding which suppresses the release of pro-inflammatory cytokines. In microglia, required with TREM2 for phagocytosis of apoptotic neurons. Required with ITGAM/CD11B in microglia to control production of microglial superoxide ions which promote the neuronal apoptosis that occurs during brain development. Promotes pro-inflammatory responses in microglia following nerve injury which accelerates degeneration of injured neurons. ositively regulates the expression of the IRAK3/IRAK-M kinase and IL10 production by liver dendritic cells and inhibits their T cell allosimulatory ability. Negatively regulates B cell proliferation. Required for CSF1-mediated osteoclast cytoskeletal organization. Positively regulates multinucleation during osteoclast development. The chain is TYRO protein tyrosine kinase-binding protein from Rattus norvegicus (Rat).